Consider the following 325-residue polypeptide: Beta-ketoacyl-[acyl-carrier-protein] synthase III (325 aa).

Residues cysteine 112 and histidine 250 contribute to the active site. The segment at 251-255 (QANIR) is ACP-binding. The active site involves asparagine 280.

It belongs to the thiolase-like superfamily. FabH family. As to quaternary structure, homodimer.

Its subcellular location is the cytoplasm. It carries out the reaction malonyl-[ACP] + acetyl-CoA + H(+) = 3-oxobutanoyl-[ACP] + CO2 + CoA. Its pathway is lipid metabolism; fatty acid biosynthesis. In terms of biological role, catalyzes the condensation reaction of fatty acid synthesis by the addition to an acyl acceptor of two carbons from malonyl-ACP. Catalyzes the first condensation reaction which initiates fatty acid synthesis and may therefore play a role in governing the total rate of fatty acid production. Possesses both acetoacetyl-ACP synthase and acetyl transacylase activities. Its substrate specificity determines the biosynthesis of branched-chain and/or straight-chain of fatty acids. In Streptococcus mutans serotype c (strain ATCC 700610 / UA159), this protein is Beta-ketoacyl-[acyl-carrier-protein] synthase III.